A 437-amino-acid polypeptide reads, in one-letter code: F-box/FBD/LRR-repeat protein At5g22700 (437 aa).

An F-box domain is found at 5 to 51; it reads GDRISSLPDELLCQILSNLPTKNAVTTSILSTRWRSIWLSTPVLDID. 7 LRR repeats span residues 86 to 113, 134 to 160, 161 to 186, 187 to 210, 215 to 240, 272 to 297, and 322 to 350; these read RDDV…EVDC, SLRL…HLEE, NIYY…TVVR, IVDI…KLVL, GWFI…SLKD, PVTF…TISG, and NARF…VLGL. The FBD domain occupies 361–406; that stretch reads RVSSVPPCFLSSLEFVEIRSRLCRKRYVMKVARYFAKNSVMLKKFV.

The chain is F-box/FBD/LRR-repeat protein At5g22700 from Arabidopsis thaliana (Mouse-ear cress).